A 69-amino-acid chain; its full sequence is Large ribosomal subunit protein bL28 (69 aa).

This sequence belongs to the bacterial ribosomal protein bL28 family.

In Nitratidesulfovibrio vulgaris (strain DSM 19637 / Miyazaki F) (Desulfovibrio vulgaris), this protein is Large ribosomal subunit protein bL28.